A 347-amino-acid chain; its full sequence is Phosphate acyltransferase (347 aa).

It belongs to the PlsX family. As to quaternary structure, homodimer. Probably interacts with PlsY.

The protein resides in the cytoplasm. The enzyme catalyses a fatty acyl-[ACP] + phosphate = an acyl phosphate + holo-[ACP]. It participates in lipid metabolism; phospholipid metabolism. In terms of biological role, catalyzes the reversible formation of acyl-phosphate (acyl-PO(4)) from acyl-[acyl-carrier-protein] (acyl-ACP). This enzyme utilizes acyl-ACP as fatty acyl donor, but not acyl-CoA. This is Phosphate acyltransferase from Anaplasma marginale (strain St. Maries).